The sequence spans 272 residues: Universal stress protein MT2699 (272 aa).

ATP is bound by residues glycine 15, glycine 109–arginine 115, and serine 123–threonine 124.

This sequence belongs to the universal stress protein A family.

The polypeptide is Universal stress protein MT2699 (Mycobacterium tuberculosis (strain CDC 1551 / Oshkosh)).